The sequence spans 97 residues: uncharacterized protein (97 aa).

Residues 1-20 (MAKEQTDRTTLDLFAHERRP) show a composition bias toward basic and acidic residues. Positions 1–30 (MAKEQTDRTTLDLFAHERRPGRPKTNPLSR) are disordered.

This is an uncharacterized protein from Escherichia coli O157:H7.